A 227-amino-acid polypeptide reads, in one-letter code: uncharacterized protein (227 aa).

The protein belongs to the flavoredoxin family. It depends on FMN as a cofactor.

This is an uncharacterized protein from Deinococcus radiodurans (strain ATCC 13939 / DSM 20539 / JCM 16871 / CCUG 27074 / LMG 4051 / NBRC 15346 / NCIMB 9279 / VKM B-1422 / R1).